A 390-amino-acid polypeptide reads, in one-letter code: Lipid-A-disaccharide synthase (390 aa).

Belongs to the LpxB family.

It catalyses the reaction a lipid X + a UDP-2-N,3-O-bis[(3R)-3-hydroxyacyl]-alpha-D-glucosamine = a lipid A disaccharide + UDP + H(+). It functions in the pathway bacterial outer membrane biogenesis; LPS lipid A biosynthesis. Its function is as follows. Condensation of UDP-2,3-diacylglucosamine and 2,3-diacylglucosamine-1-phosphate to form lipid A disaccharide, a precursor of lipid A, a phosphorylated glycolipid that anchors the lipopolysaccharide to the outer membrane of the cell. This chain is Lipid-A-disaccharide synthase, found in Rickettsia felis (strain ATCC VR-1525 / URRWXCal2) (Rickettsia azadi).